Here is a 91-residue protein sequence, read N- to C-terminus: Probable Fe(2+)-trafficking protein (91 aa).

The protein belongs to the Fe(2+)-trafficking protein family.

Its function is as follows. Could be a mediator in iron transactions between iron acquisition and iron-requiring processes, such as synthesis and/or repair of Fe-S clusters in biosynthetic enzymes. In Ralstonia nicotianae (strain ATCC BAA-1114 / GMI1000) (Ralstonia solanacearum), this protein is Probable Fe(2+)-trafficking protein.